The chain runs to 293 residues: Elongation factor Ts (293 aa).

Residues 79 to 82 form an involved in Mg(2+) ion dislocation from EF-Tu region; it reads TDFV.

This sequence belongs to the EF-Ts family.

The protein resides in the cytoplasm. In terms of biological role, associates with the EF-Tu.GDP complex and induces the exchange of GDP to GTP. It remains bound to the aminoacyl-tRNA.EF-Tu.GTP complex up to the GTP hydrolysis stage on the ribosome. In Bacillus velezensis (strain DSM 23117 / BGSC 10A6 / LMG 26770 / FZB42) (Bacillus amyloliquefaciens subsp. plantarum), this protein is Elongation factor Ts.